The following is a 153-amino-acid chain: Large ribosomal subunit protein uL30 (153 aa).

The protein belongs to the universal ribosomal protein uL30 family. As to quaternary structure, part of the 50S ribosomal subunit.

This chain is Large ribosomal subunit protein uL30, found in Methanocella arvoryzae (strain DSM 22066 / NBRC 105507 / MRE50).